We begin with the raw amino-acid sequence, 490 residues long: Dipeptide and tripeptide permease A (490 aa).

At 1–34 the chain is on the cytoplasmic side; it reads MSNANNNQPENVSLNAFKQPRAFYLIFSIELWER. Residues 35-55 form a helical membrane-spanning segment; it reads FGYYGLQGIMAVYLVKMLGMT. Residues 56–59 lie on the Periplasmic side of the membrane; it reads EADS. Residues 60 to 80 form a helical membrane-spanning segment; the sequence is ITLFSSFSALVYGFVAIGGWL. The Cytoplasmic segment spans residues 81–89; it reads GDKVLGAKR. The helical transmembrane segment at 90-110 threads the bilayer; sequence VIMLGALVLAIGYAFVAYSGH. Position 111 (Asp111) is a topological domain, periplasmic. Residues 112–132 traverse the membrane as a helical segment; sequence LSLVYVGMATIAVGNGLFKAN. Over 133 to 153 the chain is Cytoplasmic; sequence PSSLLSTCYEKNDPRLDGAFT. Residues 154–174 form a helical membrane-spanning segment; it reads MYYMSVNIGSFFSMLATPWLA. Over 175–176 the chain is Periplasmic; it reads AR. Residues 177–197 traverse the membrane as a helical segment; that stretch reads FGWSVAFSLSVVGMLITLVNF. Residues 198 to 217 lie on the Cytoplasmic side of the membrane; it reads MMCRRWVKDQGSKPDFAPLQ. A helical transmembrane segment spans residues 218–238; the sequence is VGKLMMTLVGVVILVAISTWL. Topologically, residues 239–246 are periplasmic; the sequence is LHNQTIAR. A helical transmembrane segment spans residues 247 to 267; sequence WALAIISAGIILIFAKETFAL. At 268–274 the chain is on the cytoplasmic side; sequence QGGARRK. A helical transmembrane segment spans residues 275-295; that stretch reads MIVAFLLMLEAVVFFVLYSQM. The Periplasmic segment spans residues 296–320; sequence PTSLNFFAIHNVEHSIFGIAFEPEQ. A helical membrane pass occupies residues 321 to 341; the sequence is YQALNPFWIMVASPILAAIYN. Over 342 to 352 the chain is Cytoplasmic; it reads KMGDRLPMPHK. Residues 353 to 373 form a helical membrane-spanning segment; the sequence is FAIGMVLCSGAFLVLPWGASF. Residues 374–383 lie on the Periplasmic side of the membrane; that stretch reads ANEAGIVSVN. A helical membrane pass occupies residues 384–404; sequence WLILSYALQSIGELMISGLGL. The Cytoplasmic segment spans residues 405-414; that stretch reads AMVAQLVPQR. Residues 415 to 435 form a helical membrane-spanning segment; sequence LMGFIMGSWFLTTAAAALIAG. Residues 436 to 460 lie on the Periplasmic side of the membrane; that stretch reads KVAALTAVPGGEVADPHASLAIYSH. Residues 461–481 traverse the membrane as a helical segment; the sequence is VFMQIGLATAVIAVLMLLTAP. Over 482–490 the chain is Cytoplasmic; that stretch reads KLNRMTLGD.

The protein belongs to the major facilitator superfamily. Proton-dependent oligopeptide transporter (POT/PTR) (TC 2.A.17) family. DtpA subfamily.

The protein resides in the cell inner membrane. Its function is as follows. Proton-dependent permease that transports di- and tripeptides. The polypeptide is Dipeptide and tripeptide permease A (Edwardsiella piscicida).